Consider the following 187-residue polypeptide: Elongation factor P (187 aa).

It belongs to the elongation factor P family.

Its subcellular location is the cytoplasm. The protein operates within protein biosynthesis; polypeptide chain elongation. In terms of biological role, involved in peptide bond synthesis. Stimulates efficient translation and peptide-bond synthesis on native or reconstituted 70S ribosomes in vitro. Probably functions indirectly by altering the affinity of the ribosome for aminoacyl-tRNA, thus increasing their reactivity as acceptors for peptidyl transferase. The polypeptide is Elongation factor P (Frankia casuarinae (strain DSM 45818 / CECT 9043 / HFP020203 / CcI3)).